The primary structure comprises 1214 residues: MPVSLAVCETANVVNAALRESLGSGIGGGGGCVAAAASRSSAGSGSGSVAGVDEAKIGDVSGTDNLQSQIVANAKRVLLAKIEYEEVENYHESVLAKLKSKYIVIKPDNNNGAANCNYKTNGKAVGSNGHDNNTVNGGTVNGNRKQTVDSGQSNQNSSANPNELPKPKRVLYPRENIRIGWKQSERKWQVGAGMLNVGNTCYLNSTLQALFHIPALANWLVSETSHVENCNISESCGSGGCIICAMAKTLQTTQSNQSAVRPFLIYTKLRQICKHMVVGRQEDAHEFLRFLVEAMEKAYLMRFRNFKELDQLVKETTPISQIFGGYLRSEVRCLSCNHVSITFQHFQDLLLDIRKADTLEEAFDGYFSRERLEDMGYKCEGCKKKVSATKQFSLERAPITLCIQLKRFSMMGNKLTKQISFKPRIDLSRFAARSPTAAAQPLSYRLVSMVTHLGVSQHCGHYTAIGLTEAGSYYNFDDSYVKPIAMQSVCNTNAYIMFYELDVANSSSSSTINNNSSSSSNNSVAPKLNGLRLSNGAHSPAAATVAVAATATSTSASAVSPRFIGPQLPNGYANSNGHALGGAKTTIQFKTTPQKQLQQQQQQQNGLLMGANKFQESSQSKHSLAGTLHKGEAAPNANTNANANKSSCNNNITSQHQQQHILPISSDEDEDEDDSDDDDDDDDDDVKANTAPQLPSMPKMFEDSESVAQTAKLKPKTPLKSLVPYESASEEEQEQQQQQQQQQLLQTPQQLAANPRKRRSGSDSSESEEEAPPPLPSILRNGHAKTNGSVSNTSNSSHSKAKSASNASSANVNSSKQKTDAIDEIFKSLNNYKNKHRIAADDDEDGDGDGDGHGNEQVQTEQGTKKLNSASSASASKSNGWQSQNGKAPSSPKTPPSPAVIKSKTGIWQITRTNDDDDEEDEEEDDVEADADQEDDDDEVVVVEEPQVSVTPKNPKNPFAASKSAEANATIAGAKRQKLLNGSAKSAATTRPGNGYQSESVANGSAVSELLKQNHRGYGTSVLSWNGKPSELDKESFDLVCAKRIAGHGDTDVHSDVNSSSNNSSNINSNSNSNSNGNGKRKNSTLLAEAREQRKRDAEDEEENEMDRGRQRKVKSASVKSNNSTPGYNPFQEFENQKRWHSNKSGTFPRFYHQNNRPNFQQRNKFKFNRFGGGAKFQQQRALQRHLAAGGGFTRRQQQSTGQQQQQQQQQQQS.

Positions 124-169 (AVGSNGHDNNTVNGGTVNGNRKQTVDSGQSNQNSSANPNELPKPKR) are disordered. The segment covering 132–143 (NNTVNGGTVNGN) has biased composition (low complexity). A compositionally biased stretch (polar residues) spans 144-161 (RKQTVDSGQSNQNSSANP). Residues 192–502 (AGMLNVGNTC…NAYIMFYELD (311 aa)) form the USP domain. Catalysis depends on Cys201, which acts as the Nucleophile. His461 (proton acceptor) is an active-site residue. A compositionally biased stretch (low complexity) spans 509-523 (SSTINNNSSSSSNNS). The tract at residues 509 to 532 (SSTINNNSSSSSNNSVAPKLNGLR) is disordered. Residues Ser553 and Ser555 each carry the phosphoserine modification. Disordered stretches follow at residues 631–819 (GEAA…KQKT), 836–964 (HRIA…ASKS), 977–1001 (QKLL…SESV), 1048–1161 (HGDT…PNFQ), and 1176–1214 (KFQQ…QQQS). Over residues 633–651 (AAPNANTNANANKSSCNNN) the composition is skewed to low complexity. The span at 666-685 (SDEDEDEDDSDDDDDDDDDD) shows a compositional bias: acidic residues. The residue at position 717 (Thr717) is a Phosphothreonine. Phosphoserine occurs at positions 727 and 729. 2 stretches are compositionally biased toward low complexity: residues 735–751 (QQQQ…PQQL) and 785–816 (KTNG…NSSK). Residues 856 to 868 (EQVQTEQGTKKLN) show a composition bias toward polar residues. Residues 869–878 (SASSASASKS) are compositionally biased toward low complexity. Ser891 bears the Phosphoserine mark. Thr894 is modified (phosphothreonine). Ser897 bears the Phosphoserine mark. Over residues 915–942 (DDDDEEDEEEDDVEADADQEDDDDEVVV) the composition is skewed to acidic residues. At Thr951 the chain carries Phosphothreonine. The span at 983 to 1001 (SAKSAATTRPGNGYQSESV) shows a compositional bias: polar residues. Residues 1058 to 1076 (NSSSNNSSNINSNSNSNSN) show a composition bias toward low complexity. Positions 1089–1098 (EAREQRKRDA) are enriched in basic and acidic residues. Low complexity-rich tracts occupy residues 1178-1188 (QQQRALQRHLA) and 1197-1214 (QQQS…QQQS).

This sequence belongs to the peptidase C19 family. Interacts with atms/PAF1, but not with CycT.

Its subcellular location is the nucleus. It is found in the nucleolus. It catalyses the reaction Thiol-dependent hydrolysis of ester, thioester, amide, peptide and isopeptide bonds formed by the C-terminal Gly of ubiquitin (a 76-residue protein attached to proteins as an intracellular targeting signal).. Required for maintaining multiple types of adult stem cells, including male and female germline, epithelial follicle cell and intestinal stem cells. May function as a transcriptional repressor by continually deubiquiting histone H2B at the promoters of genes critical for cellular differentiation, thereby preventing histone H3 'Lys-4' trimethylation (H3K4). Controls selective autophagy activation by ubiquitinated proteins. This is Ubiquitin carboxyl-terminal hydrolase 36 (Usp36) from Drosophila virilis (Fruit fly).